Here is a 264-residue protein sequence, read N- to C-terminus: Thymidylate synthase (264 aa).

Residue Arg21 coordinates dUMP. Position 51 (His51) interacts with (6R)-5,10-methylene-5,6,7,8-tetrahydrofolate. DUMP is bound at residue 126 to 127 (RR). Residue Cys146 is the Nucleophile of the active site. DUMP-binding positions include 166–169 (RSCD), Asn177, and 207–209 (HLY). Residue Asp169 participates in (6R)-5,10-methylene-5,6,7,8-tetrahydrofolate binding. Position 263 (Ala263) interacts with (6R)-5,10-methylene-5,6,7,8-tetrahydrofolate.

Belongs to the thymidylate synthase family. Bacterial-type ThyA subfamily. As to quaternary structure, homodimer.

The protein localises to the cytoplasm. It catalyses the reaction dUMP + (6R)-5,10-methylene-5,6,7,8-tetrahydrofolate = 7,8-dihydrofolate + dTMP. It functions in the pathway pyrimidine metabolism; dTTP biosynthesis. Its function is as follows. Catalyzes the reductive methylation of 2'-deoxyuridine-5'-monophosphate (dUMP) to 2'-deoxythymidine-5'-monophosphate (dTMP) while utilizing 5,10-methylenetetrahydrofolate (mTHF) as the methyl donor and reductant in the reaction, yielding dihydrofolate (DHF) as a by-product. This enzymatic reaction provides an intracellular de novo source of dTMP, an essential precursor for DNA biosynthesis. The polypeptide is Thymidylate synthase (Yersinia pseudotuberculosis serotype O:1b (strain IP 31758)).